Reading from the N-terminus, the 213-residue chain is Charged multivesicular body protein 2b (213 aa).

Residue Ala-2 is modified to N-acetylalanine. Residues 25 to 55 are a coiled coil; that stretch reads QRAIIRDRAALEKQEKQLELEIKKMAKIGNK. The span at 179–194 shows a compositional bias: low complexity; it reads AKAPSAARSLPSASTS. The disordered stretch occupies residues 179 to 199; the sequence is AKAPSAARSLPSASTSKATIS. Residue Ser-199 is modified to Phosphoserine. The short motif at 201–211 is the MIT-interacting motif element; the sequence is EEIERQLKALG.

The protein belongs to the SNF7 family. Probable core component of the endosomal sorting required for transport complex III (ESCRT-III). ESCRT-III components are thought to multimerize to form a flat lattice on the perimeter membrane of the endosome. Several assembly forms of ESCRT-III may exist that interact and act sequentially. Interacts with CHMP2A. Interacts with VPS4A. Interacts with VPS4B; the interaction is direct. In terms of tissue distribution, in brain, it is expressed in all neuronal populations with a relatively enhanced expression in the hippocampus, frontal and temporal lobes and in both granule and Purkinje cells of the cerebellum. Not expressed in astrocytes or oligodendrocytes.

The protein resides in the cytoplasm. The protein localises to the cytosol. It is found in the late endosome membrane. Probable core component of the endosomal sorting required for transport complex III (ESCRT-III) which is involved in multivesicular bodies (MVBs) formation and sorting of endosomal cargo proteins into MVBs. MVBs contain intraluminal vesicles (ILVs) that are generated by invagination and scission from the limiting membrane of the endosome and mostly are delivered to lysosomes enabling degradation of membrane proteins, such as stimulated growth factor receptors, lysosomal enzymes and lipids. The MVB pathway appears to require the sequential function of ESCRT-O, -I,-II and -III complexes. ESCRT-III proteins mostly dissociate from the invaginating membrane before the ILV is released. The ESCRT machinery also functions in topologically equivalent membrane fission events, such as the terminal stages of cytokinesis. ESCRT-III proteins are believed to mediate the necessary vesicle extrusion and/or membrane fission activities, possibly in conjunction with the AAA ATPase VPS4. The sequence is that of Charged multivesicular body protein 2b (Chmp2b) from Mus musculus (Mouse).